The following is a 273-amino-acid chain: MNNRVHQGHLARKRFGQNFLNDQFVIDSIVSAINPQKGQAMVEIGPGLAALTEPVGERLDQLTVIELDRDLAARLQTHPFLGPKLTIYQQDAMTFNFGELAAKMGQPLRVFGNLPYNISTPLMFHLFSYTDAIADMHFMLQKEVVNRLVAGPNSKAYGRLSVMAQYYCNVIPVLEVPPSAFTPPPKVDSAVVRLVPHATMPHPVKDVRVLSRITTEAFNQRRKTIRNSLGNLFSAEVLTGMGIDPAMRAENISVAQYCQMANYLAENAPLQES.

Positions 18, 20, 45, 66, 91, and 113 each coordinate S-adenosyl-L-methionine.

Belongs to the class I-like SAM-binding methyltransferase superfamily. rRNA adenine N(6)-methyltransferase family. RsmA subfamily.

The protein resides in the cytoplasm. It carries out the reaction adenosine(1518)/adenosine(1519) in 16S rRNA + 4 S-adenosyl-L-methionine = N(6)-dimethyladenosine(1518)/N(6)-dimethyladenosine(1519) in 16S rRNA + 4 S-adenosyl-L-homocysteine + 4 H(+). Its function is as follows. Specifically dimethylates two adjacent adenosines (A1518 and A1519) in the loop of a conserved hairpin near the 3'-end of 16S rRNA in the 30S particle. May play a critical role in biogenesis of 30S subunits. The sequence is that of Ribosomal RNA small subunit methyltransferase A from Escherichia coli O81 (strain ED1a).